A 181-amino-acid chain; its full sequence is Small ribosomal subunit protein bS16 (181 aa).

Positions lysine 150–glutamate 181 are disordered. Residues lysine 158–glutamate 181 are compositionally biased toward low complexity.

Belongs to the bacterial ribosomal protein bS16 family.

In Bacteroides fragilis (strain YCH46), this protein is Small ribosomal subunit protein bS16.